Reading from the N-terminus, the 67-residue chain is Neurotoxin Os3 (67 aa).

The 65-residue stretch at 3–67 (RDGYIAQPHN…GVIVDGEKCH (65 aa)) folds into the LCN-type CS-alpha/beta domain. Cystine bridges form between Cys13–Cys66, Cys17–Cys39, Cys24–Cys48, and Cys28–Cys50.

It belongs to the long (4 C-C) scorpion toxin superfamily. Sodium channel inhibitor family. Alpha subfamily. Expressed by the venom gland.

Its subcellular location is the secreted. Binds to sodium channels (Nav) and inhibits the inactivation of the activated channels, thereby blocking neuronal transmission. The chain is Neurotoxin Os3 from Orthochirus scrobiculosus (Central Asian scorpion).